Reading from the N-terminus, the 662-residue chain is Biosynthetic arginine decarboxylase (662 aa).

N6-(pyridoxal phosphate)lysine is present on lysine 126. 308–318 contacts substrate; sequence LNVGGGLGVDY.

This sequence belongs to the Orn/Lys/Arg decarboxylase class-II family. SpeA subfamily. The cofactor is Mg(2+). Requires pyridoxal 5'-phosphate as cofactor.

The enzyme catalyses L-arginine + H(+) = agmatine + CO2. Catalyzes the biosynthesis of agmatine from arginine. The protein is Biosynthetic arginine decarboxylase of Deinococcus radiodurans (strain ATCC 13939 / DSM 20539 / JCM 16871 / CCUG 27074 / LMG 4051 / NBRC 15346 / NCIMB 9279 / VKM B-1422 / R1).